Consider the following 796-residue polypeptide: Endonuclease MutS2 (796 aa).

Residue 339–346 (GPNTGGKT) participates in ATP binding. Residues 620-644 (EKLGDTDSSLVSKAKKNRKQHKPSD) are disordered. The 76-residue stretch at 721–796 (LNIIGKRVDE…DHGVTIVEFK (76 aa)) folds into the Smr domain.

It belongs to the DNA mismatch repair MutS family. MutS2 subfamily. In terms of assembly, homodimer. Binds to stalled ribosomes, contacting rRNA.

In terms of biological role, endonuclease that is involved in the suppression of homologous recombination and thus may have a key role in the control of bacterial genetic diversity. Its function is as follows. Acts as a ribosome collision sensor, splitting the ribosome into its 2 subunits. Detects stalled/collided 70S ribosomes which it binds and splits by an ATP-hydrolysis driven conformational change. Acts upstream of the ribosome quality control system (RQC), a ribosome-associated complex that mediates the extraction of incompletely synthesized nascent chains from stalled ribosomes and their subsequent degradation. Probably generates substrates for RQC. This is Endonuclease MutS2 from Lachnoclostridium phytofermentans (strain ATCC 700394 / DSM 18823 / ISDg) (Clostridium phytofermentans).